Consider the following 536-residue polypeptide: Austinoid biosynthesis cluster protein W (536 aa).

Positions methionine 1–alanine 19 are cleaved as a signal peptide. Disordered stretches follow at residues glycine 141–proline 164, serine 185–serine 220, phenylalanine 261–glycine 302, proline 385–glycine 423, and proline 491–glutamate 536. Positions serine 195 to aspartate 208 are enriched in low complexity. Gly residues predominate over residues serine 209–serine 220. Composition is skewed to low complexity over residues alanine 287–glycine 302 and alanine 408–glycine 423.

It functions in the pathway secondary metabolite biosynthesis; terpenoid biosynthesis. In terms of biological role, part of the gene cluster that mediates the biosynthesis of calidodehydroaustin, a fungal meroterpenoid. The first step of the pathway is the synthesis of 3,5-dimethylorsellinic acid by the polyketide synthase ausA. 3,5-dimethylorsellinic acid is then prenylated by the polyprenyl transferase ausN. Further epoxidation by the FAD-dependent monooxygenase ausM and cyclization by the probable terpene cyclase ausL lead to the formation of protoaustinoid A. Protoaustinoid A is then oxidized to spiro-lactone preaustinoid A3 by the combined action of the FAD-binding monooxygenases ausB and ausC, and the dioxygenase ausE. Acid-catalyzed keto-rearrangement and ring contraction of the tetraketide portion of preaustinoid A3 by ausJ lead to the formation of preaustinoid A4. The aldo-keto reductase ausK, with the help of ausH, is involved in the next step by transforming preaustinoid A4 into isoaustinone which is in turn hydroxylated by the P450 monooxygenase ausI to form austinolide. The cytochrome P450 monooxygenase ausG modifies austinolide to austinol. Austinol is further acetylated to austin by the O-acetyltransferase ausP, which spontaneously changes to dehydroaustin. The cytochrome P450 monooxygenase ausR then converts dehydroaustin is into 7-dehydrodehydroaustin. The hydroxylation catalyzed by ausR permits the O-acetyltransferase ausQ to add an additional acetyl group to the molecule, leading to the formation of acetoxydehydroaustin. The short chain dehydrogenase ausT catalyzes the reduction of the double bond present between carbon atoms 1 and 2 to convert 7-dehydrodehydroaustin into 1,2-dihydro-7-hydroxydehydroaustin. AusQ catalyzes not only an acetylation reaction but also the addition of the PKS ausV diketide product to 1,2-dihydro-7-hydroxydehydroaustin, forming precalidodehydroaustin. Finally, the iron/alpha-ketoglutarate-dependent dioxygenase converts precalidodehydroaustin into calidodehydroaustin. In Aspergillus calidoustus, this protein is Austinoid biosynthesis cluster protein W.